A 480-amino-acid chain; its full sequence is Proline--tRNA ligase (480 aa).

The protein belongs to the class-II aminoacyl-tRNA synthetase family. ProS type 3 subfamily. Homodimer.

The protein localises to the cytoplasm. It carries out the reaction tRNA(Pro) + L-proline + ATP = L-prolyl-tRNA(Pro) + AMP + diphosphate. Its function is as follows. Catalyzes the attachment of proline to tRNA(Pro) in a two-step reaction: proline is first activated by ATP to form Pro-AMP and then transferred to the acceptor end of tRNA(Pro). This Roseiflexus castenholzii (strain DSM 13941 / HLO8) protein is Proline--tRNA ligase.